The chain runs to 132 residues: Protamine (132 aa).

Disordered stretches follow at residues 17-46 (GGKK…RGGR) and 96-115 (SMLK…RRRR). 2 stretches are compositionally biased toward basic residues: residues 18–46 (GKKR…RGGR) and 98–115 (LKKR…RRRR).

It belongs to the UPF0771 family. As to expression, testis.

The protein resides in the nucleus. It localises to the chromosome. Protamines substitute for histones in the chromatin of sperm during the haploid phase of spermatogenesis. They compact sperm DNA into a highly condensed, stable and inactive complex. This is Protamine from Anthonomus grandis (Mexican cotton boll weevil).